Consider the following 468-residue polypeptide: E3 ubiquitin-protein ligase TRIM11 (468 aa).

The segment at 16-57 (CAICLDYFTDPVMTDCGHNFCRECIRRCWGQPEGPYACPECR) adopts an RING-type zinc-finger fold. Residue serine 85 is modified to Phosphoserine. A B box-type zinc finger spans residues 87–128 (VPQGVCAAHREPLAAFCGDELRLLCAACERSGEHWAHRVRPL). Zn(2+) contacts are provided by cysteine 92, histidine 95, cysteine 114, and histidine 120. Residues 128 to 233 (LQDAAEDLKS…QLAELITELE (106 aa)) adopt a coiled-coil conformation. Positions 268-461 (EMRTVCRVPG…MTICRLKGGP (194 aa)) constitute a B30.2/SPRY domain. Lysine 458 is covalently cross-linked (Glycyl lysine isopeptide (Lys-Gly) (interchain with G-Cter in ubiquitin)).

It belongs to the TRIM/RBCC family. In terms of assembly, binds cytoplasmic tail of integrin alpha-1. Interacts with the HN peptide. Interacts with PHOX2B. Interacts (when autoubiquitinated) with SQSTM1/p62; promoting AIM2 recruitment to autophagosomes. Interacts with AIM2; promoting its autophagy-dependent degradation. Autoubiquitinated upon DNA stimulation; autoubiquitination promotes interaction with SQSTM1/p62 and recruitment of AIM2 to autophagosomes.

Its subcellular location is the cytoplasm. The protein localises to the nucleus. It catalyses the reaction S-ubiquitinyl-[E2 ubiquitin-conjugating enzyme]-L-cysteine + [acceptor protein]-L-lysine = [E2 ubiquitin-conjugating enzyme]-L-cysteine + N(6)-ubiquitinyl-[acceptor protein]-L-lysine.. It participates in protein modification; protein ubiquitination. E3 ubiquitin-protein ligase that promotes the degradation of insoluble ubiquitinated proteins, including insoluble PAX6, poly-Gln repeat expanded HTT and poly-Ala repeat expanded ARX. Mediates PAX6 ubiquitination leading to proteasomal degradation, thereby modulating cortical neurogenesis. May also inhibit PAX6 transcriptional activity, possibly in part by preventing the binding of PAX6 to its consensus sequences. May contribute to the regulation of the intracellular level of HN (humanin) or HN-containing proteins through the proteasomal degradation pathway. Mediates MED15 ubiquitination leading to proteasomal degradation. May contribute to the innate restriction of retroviruses. Upon overexpression, reduces HIV-1 and murine leukemia virus infectivity, by suppressing viral gene expression. Antiviral activity depends on a functional E3 ubiquitin-protein ligase domain. May regulate TRIM5 turnover via the proteasome pathway, thus counteracting the TRIM5-mediated cross-species restriction of retroviral infection at early stages of the retroviral life cycle. Acts as an inhibitor of the AIM2 inflammasome by promoting autophagy-dependent degradation of AIM2. Mechanistically, undergoes autoubiquitination upon DNA stimulation, promoting interaction with AIM2 and SQSTM1/p62, leading to AIM2 recruitment to autophagosomes. This Bos taurus (Bovine) protein is E3 ubiquitin-protein ligase TRIM11 (TRIM11).